The chain runs to 365 residues: Glycine oxidase (365 aa).

Residues 12–13, 32–33, 40–41, 45–47, and isoleucine 173 contribute to the FAD site; these read VI, DQ, SS, and GGI. Arginine 302 contributes to the substrate binding site. 327-333 is an FAD binding site; sequence HYRNGLV.

This sequence belongs to the DAO family. ThiO subfamily. As to quaternary structure, monomer. It depends on FAD as a cofactor.

The enzyme catalyses glycine + O2 + H2O = glyoxylate + H2O2 + NH4(+). It catalyses the reaction sarcosine + O2 + H2O = methylamine + glyoxylate + H2O2. It functions in the pathway cofactor biosynthesis; thiamine diphosphate biosynthesis. Catalyzes the oxidation of glycine, leading to glyoxyl imine and hydrogen peroxide as primary products; glyoxyl imine is used for the biosynthesis of the thiazole ring of thiamine. Otherwise, glyoxyl imine is spontaneously hydrolyzed in water to produce glyoxylate and ammonia. Can also use sarcosine (N-methylglycine) as substrate, and, to a lesser extent, N-ethylglycine and D-proline. Has no activity towards other amino-acids D-Asp, D-Glu, D-Gln, D-His, D-Leu, D-Lys, D-ornithine, D-Trp, D-Val, L-Ala, L-Asp, L-Glu, L-His, L-Leu, L-Lys, L-Met and L-Pro. This chain is Glycine oxidase, found in Pseudomonas putida (strain ATCC 47054 / DSM 6125 / CFBP 8728 / NCIMB 11950 / KT2440).